A 370-amino-acid polypeptide reads, in one-letter code: Ni-sirohydrochlorin a,c-diamide reductive cyclase complex, component CfbD (370 aa).

The protein belongs to the NifD/NifK/NifE/NifN family. Homodimer or monomer. The Ni-sirohydrochlorin a,c-diamide reductive cyclase complex is composed of a NifH homolog component CfbC and a NifD homolog component CfbD. The cofactor is [4Fe-4S] cluster.

The catalysed reaction is Ni-sirohydrochlorin a,c-diamide + 3 AH2 + ATP + H2O = 15,17(3)-seco-F430-17(3)-acid + 3 A + ADP + phosphate. Its function is as follows. Involved in the biosynthesis of the unique nickel-containing tetrapyrrole coenzyme F430, the prosthetic group of methyl-coenzyme M reductase (MCR), which plays a key role in methanogenesis and anaerobic methane oxidation. Catalyzes both the six-electron reduction of the tetrahydroporphyrin ring system and the gamma-lactamization of the c-acetamide side chain of Ni-sirohydrochlorin a,c-diamide to yield 15,17(3)-seco-F430-17(3)-acid (seco-F430), the last intermediate in the biosynthesis of the coenzyme F430. This chain is Ni-sirohydrochlorin a,c-diamide reductive cyclase complex, component CfbD, found in Methanosarcina acetivorans (strain ATCC 35395 / DSM 2834 / JCM 12185 / C2A).